We begin with the raw amino-acid sequence, 584 residues long: ETHYLENE INSENSITIVE 3-like 1 protein (584 aa).

A coiled-coil region spans residues tyrosine 41–glutamate 74. The span at glutamate 67–lysine 80 shows a compositional bias: basic and acidic residues. Disordered regions lie at residues glutamate 67–methionine 93 and glutamate 565–phenylalanine 584.

It belongs to the EIN3 family. In terms of assembly, acts as a homodimer to bind the primary ethylene response element.

The protein resides in the nucleus. In terms of biological role, probable transcription factor acting as a positive regulator in the ethylene response pathway. Could bind the primary ethylene response element present in the ETHYLENE-RESPONSE-FACTOR1 promoter. The protein is ETHYLENE INSENSITIVE 3-like 1 protein (EIL1) of Arabidopsis thaliana (Mouse-ear cress).